The chain runs to 833 residues: Scavenger receptor class F member 2 (833 aa).

Positions 1 to 33 (MEGAGSRGAGPARRQGARGLGLLLLLWLLPGLA) are cleaved as a signal peptide. Over 34–433 (APQDLNPRGR…ACHLETNQRK (400 aa)) the chain is Extracellular. EGF-like domains follow at residues 63 to 102 (LGDECGIAVCEGNSTCSENEVCVRPGECRCRHGYFGANCD), 114 to 145 (CKERCSCHPHGQCEDVTGQCTCHARRWGARCE), 140 to 174 (WGARCEHACQCQHGTCHPRSGACRCEPGWWGAQCA), 175 to 204 (SACYCSATSRCDPQTGACLCHVGWWGRSCN), 205 to 233 (NQCACNSSPCEQQSGRCQCRERMFGARCD), and 228 to 262 (FGARCDRYCQCSHGRCHPVDGTCACDPGYRGKYCR). Disulfide bonds link Cys-67-Cys-78, Cys-72-Cys-90, Cys-92-Cys-101, Cys-118-Cys-126, Cys-120-Cys-133, Cys-135-Cys-144, Cys-148-Cys-155, Cys-150-Cys-162, Cys-164-Cys-173, Cys-177-Cys-185, Cys-179-Cys-192, Cys-194-Cys-203, Cys-207-Cys-214, Cys-209-Cys-221, Cys-223-Cys-232, Cys-236-Cys-243, Cys-238-Cys-250, and Cys-252-Cys-261. An N-linked (GlcNAc...) asparagine glycan is attached at Asn-75. N-linked (GlcNAc...) asparagine glycosylation is found at Asn-302 and Asn-357. In terms of domain architecture, EGF-like 7 spans 364-395 (CAFVCSDCGSGHCDFQSGRCLCSPGVHGPHCN). Intrachain disulfides connect Cys-368-Cys-376, Cys-371-Cys-383, and Cys-385-Cys-394. An N-linked (GlcNAc...) asparagine glycan is attached at Asn-395. A helical membrane pass occupies residues 434–454 (GVMGAGALLTLLLGLLLSLLG). Over 455–833 (CCCACRGKDS…SRAGTAPGAS (379 aa)) the chain is Cytoplasmic. A phosphoserine mark is found at Ser-538 and Ser-600. The interval 578–833 (SLEPTGTSTP…SRAGTAPGAS (256 aa)) is disordered. Tyr-615 carries the phosphotyrosine modification. Residues 619-630 (ARREARPARTRN) are compositionally biased toward basic and acidic residues. 3 positions are modified to phosphoserine: Ser-638, Ser-640, and Ser-695. A Phosphothreonine modification is found at Thr-712. Residues 748 to 761 (ELRDKTRSLGRAEK) are compositionally biased toward basic and acidic residues. Positions 781–798 (ASASEASGSEKAAASAPA) are enriched in low complexity. Basic residues predominate over residues 804–816 (KKTPIQKPPRKKS).

In terms of assembly, homophilic and heterophilic interaction via its extracellular domain. Interacts with SCARF1. The heterophilic interaction with SCARF1, which is stronger than the homophilic interaction with itself, is suppressed by the presence of SCARF1 ligand such as Ac-LDL.

It is found in the membrane. Probable adhesion protein, which mediates homophilic and heterophilic interactions. In contrast to SCARF1, it poorly mediates the binding and degradation of acetylated low density lipoprotein (Ac-LDL). In Mus musculus (Mouse), this protein is Scavenger receptor class F member 2 (Scarf2).